We begin with the raw amino-acid sequence, 486 residues long: Regulatory protein ViaA (486 aa).

The protein belongs to the ViaA family. As to quaternary structure, homodimer. Interacts with RavA.

The protein resides in the cytoplasm. Its function is as follows. Component of the RavA-ViaA chaperone complex, which may act on the membrane to optimize the function of some of the respiratory chains. ViaA stimulates the ATPase activity of RavA. This is Regulatory protein ViaA from Erwinia tasmaniensis (strain DSM 17950 / CFBP 7177 / CIP 109463 / NCPPB 4357 / Et1/99).